A 395-amino-acid chain; its full sequence is MKRVVVGLSGGVDSSVAAYLLQQQGYEVIGLFMKNWHDDSVTISNECPWLEDSNDALLVAEKLGIPFQTVDLSEEYKEKIVDYMFNEYEKGRTPNPDVLCNREIKFDVFMKIALSLGADYVATGHYCQKSEIEVDGKTVYQLIAGNDVNKDQSYFLCQLSQEQLSKALFPIGALTKPEVREIAAEMELVTAEKKDSQGLCFIGKVRLPEFLQQKLQPKEGTIVQIDKNDPIYNVEKQAGLSLEEELKIESQKLNYRPEMGKVMGKHQGAHYFTVGQRKGLNVGGTTDPLFVIATDVDTNTIYTGLTSNHPGLFKKALFVGNSEVHWVREDLKLKEGEQMEVMARIRYRQPLQKATLHQFANGMYVHFDEPQSAITEGQFVAWYLENELVGSGVIS.

ATP-binding positions include 7 to 14 (GLSGGVDS) and methionine 33. Positions 95-97 (NPD) are interaction with target base in tRNA. Residue cysteine 100 is the Nucleophile of the active site. A disulfide bridge connects residues cysteine 100 and cysteine 200. Glycine 124 is an ATP binding site. The interaction with tRNA stretch occupies residues 150-152 (KDQ). Cysteine 200 serves as the catalytic Cysteine persulfide intermediate. Residues 346–347 (RY) form an interaction with tRNA region.

Belongs to the MnmA/TRMU family.

It localises to the cytoplasm. The catalysed reaction is S-sulfanyl-L-cysteinyl-[protein] + uridine(34) in tRNA + AH2 + ATP = 2-thiouridine(34) in tRNA + L-cysteinyl-[protein] + A + AMP + diphosphate + H(+). In terms of biological role, catalyzes the 2-thiolation of uridine at the wobble position (U34) of tRNA, leading to the formation of s(2)U34. The chain is tRNA-specific 2-thiouridylase MnmA from Flavobacterium johnsoniae (strain ATCC 17061 / DSM 2064 / JCM 8514 / BCRC 14874 / CCUG 350202 / NBRC 14942 / NCIMB 11054 / UW101) (Cytophaga johnsonae).